The chain runs to 422 residues: Metallocarboxypeptidase A (422 aa).

The first 17 residues, 1–17 (MRSVLSLALLAANVVTA), serve as a signal peptide directing secretion. Residues 18 to 112 (AVVSPFDYSG…FEAYSAGYAP (95 aa)) constitute a propeptide, activation peptide. Residues 119 to 419 (SYHSYQDHLS…AGTVAMLKAV (301 aa)) enclose the Peptidase M14 domain. 2 residues coordinate Zn(2+): histidine 179 and glutamate 182. Residues 179-182 (HARE), arginine 237, and 254-255 (NR) contribute to the substrate site. Cysteine 248 and cysteine 271 are oxidised to a cystine. Residue histidine 309 coordinates Zn(2+). 310–311 (SY) is a substrate binding site. Catalysis depends on glutamate 385, which acts as the Proton donor/acceptor.

The protein belongs to the peptidase M14 family. Zn(2+) serves as cofactor.

It is found in the secreted. Functionally, extracellular metalloprotease that contributes to pathogenicity. The polypeptide is Metallocarboxypeptidase A (MCPA) (Trichophyton rubrum (Athlete's foot fungus)).